The following is a 251-amino-acid chain: MENFSLLSISGPPISSSALSAFPDIMFSRATSLPDIAKTAVPTEASSPAQALPPQYQSITVRQGIQNTALSPDCSLGDTQHGEKLRRNCTIYRPWFSPYSYFVCADKESHPEAYDFPEVQQDEGKWDNCLSEDMAESICSSSSSAENTCPREATKKSRHGLDSITSQDILMASRWHPAQQNGYKCAACCRMYPTLDFLKSHIKRGFREGFSCKVYYRKLKALWSKEPKAWLGDRLSSGSCQAFNSPAEHLR.

The protein resides in the nucleus membrane. Functionally, plays a role in spermiogenesis and fertilization. The chain is Spermatogenesis-associated protein 46 (SPATA46) from Macaca fascicularis (Crab-eating macaque).